The primary structure comprises 299 residues: Peroxisomal biogenesis factor 19 (299 aa).

The segment at 1–63 is disordered; sequence MAAAEGDGGV…SPGDTAKDAL (63 aa). Alanine 2 is subject to N-acetylalanine. The segment at 2–56 is docking to the peroxisome membrane and binding to PEX3; sequence AAAEGDGGVRAEADRELEELLESALDDFDKAKPSPAPPPTTTAPDASGPQKRSPG. The tract at residues 2–91 is necessary for PEX19 function on peroxisome biogenesis; the sequence is AAAEGDGGVR…QATAEFEKAM (90 aa). The span at 16 to 27 shows a compositional bias: acidic residues; it reads RELEELLESALD. A phosphoserine mark is found at serine 35, serine 54, and serine 66. Threonine 236 carries the post-translational modification Phosphothreonine. Cysteine 296 is modified (cysteine methyl ester). Cysteine 296 carries the S-farnesyl cysteine lipid modification. The propeptide at 297 to 299 is removed in mature form; the sequence is LIM.

It belongs to the peroxin-19 family. In terms of assembly, interacts with a broad range of peroxisomal membrane proteins, including PEX3, PEX10, PEX11A, PEX11B, PEX12, PEX13, PEX14 and PEX16, PXMP2/PMP22, PXMP4/PMP24, SLC25A17/PMP34, ABCD1/ALDP, ABCD2/ALDRP, and ABCD3/PMP70. Also interacts with the tumor suppressor CDKN2A/p19ARF.

Its subcellular location is the cytoplasm. The protein resides in the peroxisome membrane. In terms of biological role, necessary for early peroxisomal biogenesis. Acts both as a cytosolic chaperone and as an import receptor for peroxisomal membrane proteins (PMPs). Binds and stabilizes newly synthesized PMPs in the cytoplasm by interacting with their hydrophobic membrane-spanning domains, and targets them to the peroxisome membrane by binding to the integral membrane protein PEX3. Excludes CDKN2A from the nucleus and prevents its interaction with MDM2, which results in active degradation of TP53. This chain is Peroxisomal biogenesis factor 19 (PEX19), found in Bos taurus (Bovine).